The chain runs to 371 residues: N-acetyldiaminopimelate deacetylase (371 aa).

The active site involves aspartate 68. Glutamate 127 serves as the catalytic Proton acceptor.

This sequence belongs to the peptidase M20A family. N-acetyldiaminopimelate deacetylase subfamily.

The enzyme catalyses N-acetyl-(2S,6S)-2,6-diaminopimelate + H2O = (2S,6S)-2,6-diaminopimelate + acetate. Its pathway is amino-acid biosynthesis; L-lysine biosynthesis via DAP pathway; LL-2,6-diaminopimelate from (S)-tetrahydrodipicolinate (acetylase route): step 3/3. Functionally, catalyzes the conversion of N-acetyl-diaminopimelate to diaminopimelate and acetate. The chain is N-acetyldiaminopimelate deacetylase from Listeria monocytogenes serotype 4b (strain CLIP80459).